A 397-amino-acid chain; its full sequence is 3-hydroxybenzoate 6-hydroxylase (397 aa).

It belongs to the 3-hydroxybenzoate 6-hydroxylase family. In terms of assembly, monomer. It depends on FAD as a cofactor.

The enzyme catalyses 3-hydroxybenzoate + NADH + O2 + H(+) = 2,5-dihydroxybenzoate + NAD(+) + H2O. Inhibited by copper, mercury and iron ions. Its function is as follows. Catalyzes the NAD- or NADP-dependent conversion of 3-hydroxybenzoate to gentisate. NAD and NADP function equally well. In Klebsiella oxytoca, this protein is 3-hydroxybenzoate 6-hydroxylase (mhbM).